Reading from the N-terminus, the 211-residue chain is Dual specificity protein phosphatase 26 (211 aa).

The 148-residue stretch at 60–207 (NHADEVWPGL…LLALDRRLRQ (148 aa)) folds into the Tyrosine-protein phosphatase domain. Cysteine 152 (phosphocysteine intermediate) is an active-site residue.

The protein belongs to the protein-tyrosine phosphatase family. Non-receptor class dual specificity subfamily. As to quaternary structure, interacts with HSF4. In terms of tissue distribution, brain and skeletal muscle. In the brain it is expressed ubiquitously except in the hippocampus.

It localises to the cytoplasm. Its subcellular location is the nucleus. The protein localises to the golgi apparatus. It catalyses the reaction O-phospho-L-tyrosyl-[protein] + H2O = L-tyrosyl-[protein] + phosphate. It carries out the reaction O-phospho-L-seryl-[protein] + H2O = L-seryl-[protein] + phosphate. The catalysed reaction is O-phospho-L-threonyl-[protein] + H2O = L-threonyl-[protein] + phosphate. Inactivates MAPK1 and MAPK3 which leads to dephosphorylation of heat shock factor protein 4 and a reduction in its DNA-binding activity. This is Dual specificity protein phosphatase 26 (Dusp26) from Mus musculus (Mouse).